The chain runs to 304 residues: Probable 5-dehydro-4-deoxyglucarate dehydratase (304 aa).

Belongs to the DapA family.

It catalyses the reaction 5-dehydro-4-deoxy-D-glucarate + H(+) = 2,5-dioxopentanoate + CO2 + H2O. The protein operates within carbohydrate acid metabolism; D-glucarate degradation; 2,5-dioxopentanoate from D-glucarate: step 2/2. This Pseudarthrobacter chlorophenolicus (strain ATCC 700700 / DSM 12829 / CIP 107037 / JCM 12360 / KCTC 9906 / NCIMB 13794 / A6) (Arthrobacter chlorophenolicus) protein is Probable 5-dehydro-4-deoxyglucarate dehydratase.